The sequence spans 472 residues: MAFSSSSLRRSLKLGRGSRPGIPHVTDGTVTYGRRAGTMRDRGASLRPGAGGGGGDGERPKRASSLPAPASSSPGDPFWSFSVYATYVKVTNKIRFVPGMLADCTLPYLPNLKNILAGRYPNFHFTTTAHGGNLSEVAFLAVECPRNPVRAAPTVVRCSLNEIAISLMRPLEGPVPAGGLTFYLLPVTLVKPHGLYLKIQKDRAAVGAATTCSQDGAHLNSEQPQVFFSGTAAPAREGGELPFLLAQRTPRFERGGFCKVHVTQGVTCPVNAVKLSKHYVRLPVCELRGDGGAGAAAPSQIKVGVTLVREAMLAFRYNPYLFSPWCWAEATVPIHYYGPPVIVPAGQAARVVYGNVYYAPMLDELTAVIAPPLDGDGDRRFGLMGCCEWPKGGHAELAVENRTCFLQVLRTGDRLGYAIFFIAPRIPMVNLLPARYRENLSVAVTVVGGVTLNASKLHKIAELAQPLATQRD.

Low complexity-rich tracts occupy residues 1–21 (MAFS…SRPG) and 63–74 (ASSLPAPASSSP). The interval 1 to 74 (MAFSSSSLRR…SLPAPASSSP (74 aa)) is disordered.

This is an uncharacterized protein from Equus caballus (Horse).